The sequence spans 272 residues: uncharacterized protein (272 aa).

An HTH merR-type domain is found at 1 to 27 (MDTLAFINRALVEEGYSLKDIKLVLIT).

This is an uncharacterized protein from Aquifex aeolicus (strain VF5).